Here is a 232-residue protein sequence, read N- to C-terminus: Phosphatidylserine decarboxylase proenzyme (232 aa).

The active-site Schiff-base intermediate with substrate; via pyruvic acid is Ser-190. Ser-190 bears the Pyruvic acid (Ser); by autocatalysis mark.

The protein belongs to the phosphatidylserine decarboxylase family. PSD-A subfamily. As to quaternary structure, heterodimer of a large membrane-associated beta subunit and a small pyruvoyl-containing alpha subunit. Pyruvate is required as a cofactor. In terms of processing, is synthesized initially as an inactive proenzyme. Formation of the active enzyme involves a self-maturation process in which the active site pyruvoyl group is generated from an internal serine residue via an autocatalytic post-translational modification. Two non-identical subunits are generated from the proenzyme in this reaction, and the pyruvate is formed at the N-terminus of the alpha chain, which is derived from the carboxyl end of the proenzyme. The post-translation cleavage follows an unusual pathway, termed non-hydrolytic serinolysis, in which the side chain hydroxyl group of the serine supplies its oxygen atom to form the C-terminus of the beta chain, while the remainder of the serine residue undergoes an oxidative deamination to produce ammonia and the pyruvoyl prosthetic group on the alpha chain.

The protein resides in the cell membrane. It catalyses the reaction a 1,2-diacyl-sn-glycero-3-phospho-L-serine + H(+) = a 1,2-diacyl-sn-glycero-3-phosphoethanolamine + CO2. It participates in phospholipid metabolism; phosphatidylethanolamine biosynthesis; phosphatidylethanolamine from CDP-diacylglycerol: step 2/2. Catalyzes the formation of phosphatidylethanolamine (PtdEtn) from phosphatidylserine (PtdSer). This Bartonella bacilliformis (strain ATCC 35685 / KC583 / Herrer 020/F12,63) protein is Phosphatidylserine decarboxylase proenzyme.